We begin with the raw amino-acid sequence, 286 residues long: Lipoyl synthase (286 aa).

[4Fe-4S] cluster is bound by residues Cys-34, Cys-39, Cys-45, Cys-60, Cys-64, Cys-67, and Ser-271. Residues 46–260 (WESGTATFMI…EESAYSIGFS (215 aa)) form the Radical SAM core domain.

This sequence belongs to the radical SAM superfamily. Lipoyl synthase family. The cofactor is [4Fe-4S] cluster.

The protein resides in the cytoplasm. The enzyme catalyses [[Fe-S] cluster scaffold protein carrying a second [4Fe-4S](2+) cluster] + N(6)-octanoyl-L-lysyl-[protein] + 2 oxidized [2Fe-2S]-[ferredoxin] + 2 S-adenosyl-L-methionine + 4 H(+) = [[Fe-S] cluster scaffold protein] + N(6)-[(R)-dihydrolipoyl]-L-lysyl-[protein] + 4 Fe(3+) + 2 hydrogen sulfide + 2 5'-deoxyadenosine + 2 L-methionine + 2 reduced [2Fe-2S]-[ferredoxin]. The protein operates within protein modification; protein lipoylation via endogenous pathway; protein N(6)-(lipoyl)lysine from octanoyl-[acyl-carrier-protein]: step 2/2. Catalyzes the radical-mediated insertion of two sulfur atoms into the C-6 and C-8 positions of the octanoyl moiety bound to the lipoyl domains of lipoate-dependent enzymes, thereby converting the octanoylated domains into lipoylated derivatives. The sequence is that of Lipoyl synthase from Picrophilus torridus (strain ATCC 700027 / DSM 9790 / JCM 10055 / NBRC 100828 / KAW 2/3).